A 217-amino-acid polypeptide reads, in one-letter code: Adenylate kinase (217 aa).

10–15 (GAGKGT) contributes to the ATP binding site. The segment at 30 to 59 (STGDMFREAVAAGTELGVKVQNILSSGALV) is NMP. AMP-binding positions include Thr-31, Arg-36, 57-59 (ALV), 85-88 (GYPR), and Gln-92. Residues 126 to 163 (SRRICPKCGKIYNLISMPPVSDQICDDCGEQLVIREDD) are LID. Arg-127 is a binding site for ATP. 2 residues coordinate Zn(2+): Cys-130 and Cys-133. An ATP-binding site is contributed by 136 to 137 (IY). Residues Cys-150 and Cys-153 each contribute to the Zn(2+) site. Residues Arg-160 and Arg-171 each coordinate AMP. Arg-199 provides a ligand contact to ATP.

The protein belongs to the adenylate kinase family. In terms of assembly, monomer.

It is found in the cytoplasm. It catalyses the reaction AMP + ATP = 2 ADP. It participates in purine metabolism; AMP biosynthesis via salvage pathway; AMP from ADP: step 1/1. Catalyzes the reversible transfer of the terminal phosphate group between ATP and AMP. Plays an important role in cellular energy homeostasis and in adenine nucleotide metabolism. This Pseudothermotoga lettingae (strain ATCC BAA-301 / DSM 14385 / NBRC 107922 / TMO) (Thermotoga lettingae) protein is Adenylate kinase.